Here is a 203-residue protein sequence, read N- to C-terminus: Peptide deformylase (203 aa).

Fe cation-binding residues include Cys-130 and His-173. Glu-174 is an active-site residue. His-177 is a binding site for Fe cation.

This sequence belongs to the polypeptide deformylase family. The cofactor is Fe(2+).

It catalyses the reaction N-terminal N-formyl-L-methionyl-[peptide] + H2O = N-terminal L-methionyl-[peptide] + formate. Its function is as follows. Removes the formyl group from the N-terminal Met of newly synthesized proteins. Requires at least a dipeptide for an efficient rate of reaction. N-terminal L-methionine is a prerequisite for activity but the enzyme has broad specificity at other positions. The chain is Peptide deformylase from Streptococcus pneumoniae serotype 4 (strain ATCC BAA-334 / TIGR4).